Here is a 238-residue protein sequence, read N- to C-terminus: Probable transcriptional regulatory protein SSP2054 (238 aa).

It belongs to the TACO1 family. YeeN subfamily.

The protein localises to the cytoplasm. The sequence is that of Probable transcriptional regulatory protein SSP2054 from Staphylococcus saprophyticus subsp. saprophyticus (strain ATCC 15305 / DSM 20229 / NCIMB 8711 / NCTC 7292 / S-41).